The primary structure comprises 101 residues: Small ribosomal subunit protein uS14 (101 aa).

The protein belongs to the universal ribosomal protein uS14 family. Part of the 30S ribosomal subunit. Contacts proteins S3 and S10.

Functionally, binds 16S rRNA, required for the assembly of 30S particles and may also be responsible for determining the conformation of the 16S rRNA at the A site. The protein is Small ribosomal subunit protein uS14 of Acinetobacter baumannii (strain AB307-0294).